The following is a 293-amino-acid chain: 4-hydroxy-tetrahydrodipicolinate synthase (293 aa).

T45 contributes to the pyruvate binding site. Residue Y133 is the Proton donor/acceptor of the active site. The active-site Schiff-base intermediate with substrate is K161. I203 contacts pyruvate.

It belongs to the DapA family. In terms of assembly, homotetramer; dimer of dimers.

The protein resides in the cytoplasm. It carries out the reaction L-aspartate 4-semialdehyde + pyruvate = (2S,4S)-4-hydroxy-2,3,4,5-tetrahydrodipicolinate + H2O + H(+). It functions in the pathway amino-acid biosynthesis; L-lysine biosynthesis via DAP pathway; (S)-tetrahydrodipicolinate from L-aspartate: step 3/4. Its function is as follows. Catalyzes the condensation of (S)-aspartate-beta-semialdehyde [(S)-ASA] and pyruvate to 4-hydroxy-tetrahydrodipicolinate (HTPA). This is 4-hydroxy-tetrahydrodipicolinate synthase from Pseudoalteromonas atlantica (strain T6c / ATCC BAA-1087).